The sequence spans 427 residues: ATP synthase subunit beta (427 aa).

G160–T167 contacts ATP.

This sequence belongs to the ATPase alpha/beta chains family. In terms of assembly, F-type ATPases have 2 components, CF(1) - the catalytic core - and CF(0) - the membrane proton channel. CF(1) has five subunits: alpha(3), beta(3), gamma(1), delta(1), epsilon(1). CF(0) has three main subunits: a(1), b(2) and c(9-12). The alpha and beta chains form an alternating ring which encloses part of the gamma chain. CF(1) is attached to CF(0) by a central stalk formed by the gamma and epsilon chains, while a peripheral stalk is formed by the delta and b chains.

It is found in the cell membrane. The catalysed reaction is ATP + H2O + 4 H(+)(in) = ADP + phosphate + 5 H(+)(out). Its function is as follows. Produces ATP from ADP in the presence of a proton gradient across the membrane. The catalytic sites are hosted primarily by the beta subunits. The chain is ATP synthase subunit beta from Peptococcus niger.